A 495-amino-acid chain; its full sequence is Cytochrome P450 2E1 (495 aa).

298–303 is a substrate binding site; that stretch reads FAGTET. C437 contributes to the heme binding site.

Belongs to the cytochrome P450 family. Interacts with chaperones HSP70 and HSP90; this interaction is required for initial targeting to mitochondria. Requires heme as cofactor.

It localises to the endoplasmic reticulum membrane. The protein localises to the microsome membrane. Its subcellular location is the mitochondrion inner membrane. The catalysed reaction is an organic molecule + reduced [NADPH--hemoprotein reductase] + O2 = an alcohol + oxidized [NADPH--hemoprotein reductase] + H2O + H(+). It catalyses the reaction (5Z,8Z,11Z)-eicosatrienoate + reduced [NADPH--hemoprotein reductase] + O2 = 19-hydroxy-(5Z,8Z,11Z)-eicosatrienoate + oxidized [NADPH--hemoprotein reductase] + H2O + H(+). The enzyme catalyses (5Z,8Z,11Z,14Z,17Z)-eicosapentaenoate + reduced [NADPH--hemoprotein reductase] + O2 = 19-hydroxy-(5Z,8Z,11Z,14Z,17Z)-eicosapentaenoate + oxidized [NADPH--hemoprotein reductase] + H2O + H(+). It carries out the reaction (4Z,7Z,10Z,13Z,16Z,19Z)-docosahexaenoate + reduced [NADPH--hemoprotein reductase] + O2 = 21-hydroxy-(4Z,7Z,10Z,13Z,16Z,19Z)-docosahexaenoate + oxidized [NADPH--hemoprotein reductase] + H2O + H(+). The catalysed reaction is dodecanoate + reduced [NADPH--hemoprotein reductase] + O2 = 11-hydroxydodecanoate + oxidized [NADPH--hemoprotein reductase] + H2O + H(+). It catalyses the reaction tetradecanoate + reduced [NADPH--hemoprotein reductase] + O2 = 13-hydroxytetradecanoate + oxidized [NADPH--hemoprotein reductase] + H2O + H(+). The enzyme catalyses 4-nitrophenol + NADPH + O2 + H(+) = 4-nitrocatechol + NADP(+) + H2O. Its pathway is lipid metabolism; fatty acid metabolism. With respect to regulation, the omega-1 hydroxylase activity is stimulated by cytochrome b5. In terms of biological role, a cytochrome P450 monooxygenase involved in the metabolism of fatty acids. Mechanistically, uses molecular oxygen inserting one oxygen atom into a substrate, and reducing the second into a water molecule, with two electrons provided by NADPH via cytochrome P450 reductase (NADPH--hemoprotein reductase). Catalyzes the hydroxylation of carbon-hydrogen bonds. Hydroxylates fatty acids specifically at the omega-1 position displaying the highest catalytic activity for saturated fatty acids. May be involved in the oxidative metabolism of xenobiotics. This is Cytochrome P450 2E1 (CYP2E1) from Bos taurus (Bovine).